The chain runs to 95 residues: Acylphosphatase (95 aa).

In terms of domain architecture, Acylphosphatase-like spans 7-95; it reads CTMAWVYGSV…RSWDKFAILY (89 aa). Active-site residues include Arg22 and Asn40.

It belongs to the acylphosphatase family.

The catalysed reaction is an acyl phosphate + H2O = a carboxylate + phosphate + H(+). The polypeptide is Acylphosphatase (acyP) (Klebsiella pneumoniae subsp. pneumoniae (strain ATCC 700721 / MGH 78578)).